A 376-amino-acid polypeptide reads, in one-letter code: Queuine tRNA-ribosyltransferase (376 aa).

Asp90 serves as the catalytic Proton acceptor. Residues 90-94 (DSGGF), Asp144, Gln193, and Gly220 each bind substrate. The interval 251–257 (GVGTPED) is RNA binding. Catalysis depends on Asp270, which acts as the Nucleophile. Residues 275–279 (TRNAR) form an RNA binding; important for wobble base 34 recognition region. Zn(2+) contacts are provided by Cys308, Cys310, Cys313, and His339.

Belongs to the queuine tRNA-ribosyltransferase family. As to quaternary structure, homodimer. Within each dimer, one monomer is responsible for RNA recognition and catalysis, while the other monomer binds to the replacement base PreQ1. Zn(2+) serves as cofactor.

It catalyses the reaction 7-aminomethyl-7-carbaguanine + guanosine(34) in tRNA = 7-aminomethyl-7-carbaguanosine(34) in tRNA + guanine. Its pathway is tRNA modification; tRNA-queuosine biosynthesis. Its function is as follows. Catalyzes the base-exchange of a guanine (G) residue with the queuine precursor 7-aminomethyl-7-deazaguanine (PreQ1) at position 34 (anticodon wobble position) in tRNAs with GU(N) anticodons (tRNA-Asp, -Asn, -His and -Tyr). Catalysis occurs through a double-displacement mechanism. The nucleophile active site attacks the C1' of nucleotide 34 to detach the guanine base from the RNA, forming a covalent enzyme-RNA intermediate. The proton acceptor active site deprotonates the incoming PreQ1, allowing a nucleophilic attack on the C1' of the ribose to form the product. After dissociation, two additional enzymatic reactions on the tRNA convert PreQ1 to queuine (Q), resulting in the hypermodified nucleoside queuosine (7-(((4,5-cis-dihydroxy-2-cyclopenten-1-yl)amino)methyl)-7-deazaguanosine). In Cupriavidus pinatubonensis (strain JMP 134 / LMG 1197) (Cupriavidus necator (strain JMP 134)), this protein is Queuine tRNA-ribosyltransferase.